Here is a 545-residue protein sequence, read N- to C-terminus: Calcium-dependent protein kinase 10 (545 aa).

The tract at residues 1 to 36 (MGNCNACVRPDSKESKPSSKPKKPNRDRKLNPFAGD) is disordered. A lipid anchor (N-myristoyl glycine) is attached at glycine 2. In terms of domain architecture, Protein kinase spans 63–321 (YILGRELGRG…AQQVLAHPWI (259 aa)). ATP is bound by residues 69–77 (LGRGEFGIT) and lysine 92. Residue aspartate 187 is the Proton acceptor of the active site. Position 227 is a phosphoserine (serine 227). An autoinhibitory domain region spans residues 327–357 (APNVPLGDIVRSRLKQFSMMNRFKKKVLRVI). EF-hand domains lie at 364 to 399 (QEVE…VGSQ), 400 to 435 (LGEP…LQKI), 436 to 471 (ENDE…ELGE), and 472 to 507 (PDAS…GTDW). Positions 377, 379, 381, 383, 388, 413, 415, 417, 424, 449, 451, 453, 455, 460, 485, 487, 489, 491, and 496 each coordinate Ca(2+).

Belongs to the protein kinase superfamily. Ser/Thr protein kinase family. CDPK subfamily.

The protein localises to the membrane. The enzyme catalyses L-seryl-[protein] + ATP = O-phospho-L-seryl-[protein] + ADP + H(+). It carries out the reaction L-threonyl-[protein] + ATP = O-phospho-L-threonyl-[protein] + ADP + H(+). With respect to regulation, activated by calcium. Autophosphorylation may play an important role in the regulation of the kinase activity. In terms of biological role, may play a role in signal transduction pathways that involve calcium as a second messenger. May be a positive regulator controlling stress signal transduction. The polypeptide is Calcium-dependent protein kinase 10 (CPK10) (Arabidopsis thaliana (Mouse-ear cress)).